Consider the following 209-residue polypeptide: uncharacterized protein (209 aa).

Positions 39–75 form a coiled coil; the sequence is VSFENFMERYDTMEKNIQDLQNKYEEMANNLVAVMAD. Residues 103 to 131 are disordered; the sequence is TMKDATSLPPPNPNNEQSVFTNGSPTSGK. Over residues 116–129 the composition is skewed to polar residues; it reads NNEQSVFTNGSPTS.

Belongs to the asfivirus K205R family.

The protein localises to the host cytoplasm. In terms of biological role, induces host endoplasmic reticulum stress and consequently activates autophagy and NF-kappa-B signaling pathway. In turn, may induce autophagy-mediated STING1 degradation and innate immune evasion. This is an uncharacterized protein from Ornithodoros (relapsing fever ticks).